Consider the following 112-residue polypeptide: PTS system lactose-specific EIIA component (112 aa).

One can recognise a PTS EIIA type-3 domain in the interval 6–104 (EEISMVGFAL…TRYMIRMFKR (99 aa)). His80 (tele-phosphohistidine intermediate) is an active-site residue. Position 80 is a phosphohistidine; by HPr (His80). Asp83 serves as a coordination point for Mg(2+).

In terms of assembly, homotrimer. Mg(2+) serves as cofactor.

Its subcellular location is the cytoplasm. Functionally, the phosphoenolpyruvate-dependent sugar phosphotransferase system (sugar PTS), a major carbohydrate active transport system, catalyzes the phosphorylation of incoming sugar substrates concomitantly with their translocation across the cell membrane. The enzyme II LacEF PTS system is involved in lactose transport. The polypeptide is PTS system lactose-specific EIIA component (Lacticaseibacillus casei (Lactobacillus casei)).